The following is a 36-amino-acid chain: Gloverin (36 aa).

It localises to the secreted. Functionally, antibacterial protein. The chain is Gloverin from Heliothis virescens (Tobacco budworm moth).